The chain runs to 186 residues: PRA1 family protein G2 (186 aa).

4 helical membrane passes run Tyr66–Ala86, Ser87–Phe107, Val119–Thr139, and Ala142–Phe162.

This sequence belongs to the PRA1 family. As to expression, expressed in roots and trichomes.

The protein resides in the endoplasmic reticulum membrane. In terms of biological role, may be involved in both secretory and endocytic intracellular trafficking in the endosomal/prevacuolar compartments. This chain is PRA1 family protein G2 (PRA1G2), found in Arabidopsis thaliana (Mouse-ear cress).